The primary structure comprises 119 residues: Tubulin-specific chaperone A (119 aa).

It belongs to the TBCA family. Supercomplex made of cofactors A to E. Cofactors A and D function by capturing and stabilizing tubulin in a quasi-native conformation. Cofactor E binds to the cofactor D-tubulin complex; interaction with cofactor C then causes the release of tubulin polypeptides that are committed to the native state.

Its subcellular location is the cytoplasm. The protein localises to the cytoskeleton. Required for the maintenance of microtubule structures and cell polarity. Beta-tubulin-folding protein; may have a regulatory role in the tubulin-folding pathway. The protein is Tubulin-specific chaperone A (alp31) of Schizosaccharomyces pombe (strain 972 / ATCC 24843) (Fission yeast).